We begin with the raw amino-acid sequence, 187 residues long: BLOC-1-related complex subunit 8 homolog (187 aa).

The tract at residues 165-187 is disordered; it reads QSQHETANDTRQGYNDDANNDQD.

It belongs to the BORCS8 family.

It localises to the lysosome membrane. Functionally, may participate in the coupling of lysosomes to microtubule plus-end-directed kinesin motor. The polypeptide is BLOC-1-related complex subunit 8 homolog (Nematostella vectensis (Starlet sea anemone)).